The sequence spans 367 residues: Anhydro-N-acetylmuramic acid kinase (367 aa).

ATP is bound at residue 11–18; it reads GTSLDGVD.

It belongs to the anhydro-N-acetylmuramic acid kinase family.

The catalysed reaction is 1,6-anhydro-N-acetyl-beta-muramate + ATP + H2O = N-acetyl-D-muramate 6-phosphate + ADP + H(+). It functions in the pathway amino-sugar metabolism; 1,6-anhydro-N-acetylmuramate degradation. The protein operates within cell wall biogenesis; peptidoglycan recycling. In terms of biological role, catalyzes the specific phosphorylation of 1,6-anhydro-N-acetylmuramic acid (anhMurNAc) with the simultaneous cleavage of the 1,6-anhydro ring, generating MurNAc-6-P. Is required for the utilization of anhMurNAc either imported from the medium or derived from its own cell wall murein, and thus plays a role in cell wall recycling. This is Anhydro-N-acetylmuramic acid kinase from Chromobacterium violaceum (strain ATCC 12472 / DSM 30191 / JCM 1249 / CCUG 213 / NBRC 12614 / NCIMB 9131 / NCTC 9757 / MK).